We begin with the raw amino-acid sequence, 132 residues long: UPF0201 protein MTH_433 (132 aa).

It belongs to the UPF0201 family.

In Methanothermobacter thermautotrophicus (strain ATCC 29096 / DSM 1053 / JCM 10044 / NBRC 100330 / Delta H) (Methanobacterium thermoautotrophicum), this protein is UPF0201 protein MTH_433.